The chain runs to 190 residues: GTP cyclohydrolase 1 (190 aa).

Residues Cys-80, His-83, and Cys-151 each coordinate Zn(2+).

This sequence belongs to the GTP cyclohydrolase I family. Toroid-shaped homodecamer, composed of two pentamers of five dimers.

It catalyses the reaction GTP + H2O = 7,8-dihydroneopterin 3'-triphosphate + formate + H(+). It participates in cofactor biosynthesis; 7,8-dihydroneopterin triphosphate biosynthesis; 7,8-dihydroneopterin triphosphate from GTP: step 1/1. The polypeptide is GTP cyclohydrolase 1 (Rickettsia typhi (strain ATCC VR-144 / Wilmington)).